The sequence spans 469 residues: IAA-alanine resistance protein 1 (469 aa).

The N-terminal stretch at 1–28 (MSFSLRKLLVPILVLVLFLDLCVESGFS) is a signal peptide. Residues 33-58 (ARDDHVHHHGGGCSHSHDHDHDHDHD) are disordered. A compositionally biased stretch (basic and acidic residues) spans 47–58 (HSHDHDHDHDHD). Transmembrane regions (helical) follow at residues 114–134 (CSLL…IMFV) and 141–161 (WFVD…AFLH). A disordered region spans residues 170–197 (GHSHSNDHHENHDHHDHSHSDSPSHSHS). Positions 173–193 (HSNDHHENHDHHDHSHSDSPS) are enriched in basic and acidic residues. The chain crosses the membrane as a helical span at residues 201 to 221 (LSVGLSVLAGIVVFLLVEKLV). The disordered stretch occupies residues 228-315 (SSGSNTWGHH…GKSDKPEQVE (88 aa)). Residues 235 to 246 (GHHHHHHHAGSK) show a composition bias toward basic residues. Residues 247 to 256 (KLKDEGDHNN) are compositionally biased toward basic and acidic residues. The span at 257–279 (LDQQSSSDAIVNSSEKVSGGSTD) shows a compositional bias: polar residues. Positions 292–315 (ATDKSDSGTEITSDGKSDKPEQVE) are enriched in basic and acidic residues. The next 3 membrane-spanning stretches (helical) occupy residues 387–407 (LFFN…VLVW), 415–435 (SLIE…GVLA), and 448–468 (SACH…ISLI).

This sequence belongs to the ZIP transporter (TC 2.A.5) family. KE4/Catsup subfamily.

The protein localises to the membrane. Its function is as follows. May participate in auxin metabolism or response. Probable transporter. This Arabidopsis thaliana (Mouse-ear cress) protein is IAA-alanine resistance protein 1 (IAR1).